Reading from the N-terminus, the 306-residue chain is Pantothenate kinase (306 aa).

ATP is bound at residue 90–97; that stretch reads GSVAVGKS.

Belongs to the prokaryotic pantothenate kinase family.

The protein localises to the cytoplasm. It catalyses the reaction (R)-pantothenate + ATP = (R)-4'-phosphopantothenate + ADP + H(+). It participates in cofactor biosynthesis; coenzyme A biosynthesis; CoA from (R)-pantothenate: step 1/5. This is Pantothenate kinase from Ligilactobacillus salivarius (strain UCC118) (Lactobacillus salivarius).